Here is a 54-residue protein sequence, read N- to C-terminus: Large ribosomal subunit protein bL32c (54 aa).

This sequence belongs to the bacterial ribosomal protein bL32 family.

The protein localises to the plastid. It is found in the chloroplast. This is Large ribosomal subunit protein bL32c from Lactuca sativa (Garden lettuce).